Consider the following 621-residue polypeptide: Acetolactate synthase (621 aa).

The span at Met1–Ala19 shows a compositional bias: low complexity. Residues Met1–Pro39 form a disordered region. Residue Glu89 coordinates thiamine diphosphate. Residues Arg190, His296 to Arg317, and Asp339 to Asp358 contribute to the FAD site. The tract at residues His432 to Asn512 is thiamine pyrophosphate binding. The Mg(2+) site is built by Asp483 and Asn510.

It belongs to the TPP enzyme family. The cofactor is Mg(2+). Requires thiamine diphosphate as cofactor.

The enzyme catalyses 2 pyruvate + H(+) = (2S)-2-acetolactate + CO2. The protein operates within amino-acid biosynthesis; L-isoleucine biosynthesis; L-isoleucine from 2-oxobutanoate: step 1/4. Its pathway is amino-acid biosynthesis; L-valine biosynthesis; L-valine from pyruvate: step 1/4. The polypeptide is Acetolactate synthase (ilvB) (Mycobacterium avium).